The sequence spans 357 residues: Homoserine kinase (357 aa).

Residue Lys-133 forms a Glycyl lysine isopeptide (Lys-Gly) (interchain with G-Cter in ubiquitin) linkage.

This sequence belongs to the GHMP kinase family. Homoserine kinase subfamily. Homodimer.

It carries out the reaction L-homoserine + ATP = O-phospho-L-homoserine + ADP + H(+). Its pathway is amino-acid biosynthesis; L-threonine biosynthesis; L-threonine from L-aspartate: step 4/5. Commits homoserine to the threonine biosynthesis pathway by catalyzing its O-phosphorylation. The sequence is that of Homoserine kinase (THR1) from Saccharomyces cerevisiae (strain ATCC 204508 / S288c) (Baker's yeast).